The chain runs to 487 residues: Proline--tRNA ligase (487 aa).

The protein belongs to the class-II aminoacyl-tRNA synthetase family. ProS type 3 subfamily. As to quaternary structure, homodimer.

Its subcellular location is the cytoplasm. The catalysed reaction is tRNA(Pro) + L-proline + ATP = L-prolyl-tRNA(Pro) + AMP + diphosphate. Its function is as follows. Catalyzes the attachment of proline to tRNA(Pro) in a two-step reaction: proline is first activated by ATP to form Pro-AMP and then transferred to the acceptor end of tRNA(Pro). The polypeptide is Proline--tRNA ligase (Pyrobaculum calidifontis (strain DSM 21063 / JCM 11548 / VA1)).